Reading from the N-terminus, the 157-residue chain is Phosphomannomutase (157 aa).

Ser98 acts as the Phosphoserine intermediate in catalysis. Ser98 lines the Mg(2+) pocket.

Belongs to the phosphohexose mutase family. The cofactor is Mg(2+).

It catalyses the reaction alpha-D-mannose 1-phosphate = D-mannose 6-phosphate. The protein operates within nucleotide-sugar biosynthesis; GDP-alpha-D-mannose biosynthesis; alpha-D-mannose 1-phosphate from D-fructose 6-phosphate: step 2/2. Its pathway is capsule biogenesis; capsule polysaccharide biosynthesis. Its function is as follows. Involved in the biosynthesis of the K2 capsular polysaccharide biosynthesis. This Klebsiella pneumoniae protein is Phosphomannomutase (manB).